Consider the following 431-residue polypeptide: Tyrosine--tRNA ligase (431 aa).

Y34 is a binding site for L-tyrosine. The 'HIGH' region signature appears at 39–48; sequence PTADSLHIGH. L-tyrosine-binding residues include Y171 and Q175. A 'KMSKS' region motif is present at residues 231–235; that stretch reads KFGKT. K234 serves as a coordination point for ATP. The 70-residue stretch at 353-422 folds into the S4 RNA-binding domain; it reads INVVEALVKT…GKYTILRRGK (70 aa).

The protein belongs to the class-I aminoacyl-tRNA synthetase family. TyrS type 1 subfamily. As to quaternary structure, homodimer.

The protein localises to the cytoplasm. The catalysed reaction is tRNA(Tyr) + L-tyrosine + ATP = L-tyrosyl-tRNA(Tyr) + AMP + diphosphate + H(+). Its function is as follows. Catalyzes the attachment of tyrosine to tRNA(Tyr) in a two-step reaction: tyrosine is first activated by ATP to form Tyr-AMP and then transferred to the acceptor end of tRNA(Tyr). In Neisseria meningitidis serogroup C (strain 053442), this protein is Tyrosine--tRNA ligase.